The primary structure comprises 165 residues: Selenoprotein F (165 aa).

The N-terminal stretch at 1–31 (MVAMAAGPSGCLVPAFGLRLLLATVLQAVSA) is a signal peptide. U96 is a non-standard amino acid (selenocysteine).

Forms a tight complex with UGGT1/UGCGL1. Interacts with UGGT2/UGCGL2. Interacts with RDH11. In terms of processing, the N-terminus is blocked. As to expression, higher levels in prostate and thyroid gland.

It is found in the endoplasmic reticulum lumen. In terms of biological role, may be involved in redox reactions associated with the formation of disulfide bonds. May contribute to the quality control of protein folding in the endoplasmic reticulum. May regulate protein folding by enhancing the catalytic activity of UGGT1/UGCGL1 and UGGT2/UGCGL2. The polypeptide is Selenoprotein F (Homo sapiens (Human)).